The primary structure comprises 200 residues: MKRKNNKFIEISIAFILGIALGLYGQNPDYFTNLISQKSLALSALQIKHYNISELSRSKVSTCFTPPAGCTKFIANQIDKAEESIYMQAYGMSDALITTALINAQARGVKVRILLDRSNLKQKFSKLHELQRAKIDVDIDKVPGIAHNKVIIIDKKKVITGSFNFTAAADKRNAENVIIIEDQELAESYLQNWLNRKASN.

Residues 1 to 25 form the signal peptide; sequence MKRKNNKFIEISIAFILGIALGLYG. One can recognise a PLD phosphodiesterase domain in the interval 142–169; the sequence is VPGIAHNKVIIIDKKKVITGSFNFTAAA. Catalysis depends on residues His147, Lys149, and Asp154.

It belongs to the phospholipase D family. In terms of assembly, homodimer.

It is found in the secreted. It carries out the reaction a 1,2-diacyl-sn-glycero-3-phosphocholine + H2O = a 1,2-diacyl-sn-glycero-3-phosphate + choline + H(+). In terms of biological role, could be a virulence factor. This Rickettsia conorii (strain ATCC VR-613 / Malish 7) protein is Phospholipase D (pld).